Consider the following 404-residue polypeptide: Corticosteroid-binding globulin (404 aa).

The first 22 residues, methionine 1–alanine 22, serve as a signal peptide directing secretion. N-linked (GlcNAc...) asparagine glycans are attached at residues asparagine 95, asparagine 119, and asparagine 175. Glutamine 253 contributes to the cortisol binding site. An N-linked (GlcNAc...) asparagine glycan is attached at asparagine 259. Glutamine 285 is a cortisol binding site. The N-linked (GlcNAc...) asparagine glycan is linked to asparagine 326. Tryptophan 392 is a binding site for cortisol.

Belongs to the serpin family. Glycosylation in position Asn-259 is needed for steroid binding.

The protein resides in the secreted. Functionally, major transport protein for glucocorticoids and progestins in the blood of almost all vertebrate species. This chain is Corticosteroid-binding globulin (SERPINA6), found in Bos taurus (Bovine).